The chain runs to 190 residues: Potassium-transporting ATPase KdpC subunit (190 aa).

A helical membrane pass occupies residues 15 to 35 (LWILTALIYPAIVLVIGQLVF).

It belongs to the KdpC family. In terms of assembly, the system is composed of three essential subunits: KdpA, KdpB and KdpC.

It localises to the cell inner membrane. Functionally, part of the high-affinity ATP-driven potassium transport (or Kdp) system, which catalyzes the hydrolysis of ATP coupled with the electrogenic transport of potassium into the cytoplasm. This subunit acts as a catalytic chaperone that increases the ATP-binding affinity of the ATP-hydrolyzing subunit KdpB by the formation of a transient KdpB/KdpC/ATP ternary complex. This chain is Potassium-transporting ATPase KdpC subunit, found in Synechocystis sp. (strain ATCC 27184 / PCC 6803 / Kazusa).